The chain runs to 272 residues: Iodotyrosine deiodinase (272 aa).

A helical transmembrane segment spans residues 5 to 25; sequence LSGVSYGLLAGILAMLIHLVY. FMN-binding positions include 82–86, Ser110, and 110–111; these read RRSVR and SG. The 3-iodo-L-tyrosine site is built by Ala112, Glu139, Tyr143, and Lys164. FMN contacts are provided by residues 219–221 and Arg261; that span reads TST.

The protein belongs to the nitroreductase family. The cofactor is FMN.

It localises to the membrane. The enzyme catalyses 2 iodide + L-tyrosine + 2 NADP(+) = 3,5-diiodo-L-tyrosine + 2 NADPH + H(+). It carries out the reaction iodide + L-tyrosine + NADP(+) = 3-iodo-L-tyrosine + NADPH. The catalysed reaction is 3-iodo-L-tyrosine + iodide + NADP(+) = 3,5-diiodo-L-tyrosine + NADPH + H(+). It catalyses the reaction L-tyrosine + chloride + NADP(+) = 3-chloro-L-tyrosine + NADPH. The enzyme catalyses bromide + L-tyrosine + NADP(+) = 3-bromo-L-tyrosine + NADPH. Catalyzes the dehalogenation of halotyrosines such as 3,5-diiodo-L-tyrosine. Likely to also catalyze the dehalogenation of other halotyrosines such as 3-bromo-L-tyrosine, 3-chloro-L-tyrosine and 3-iodo-L-tyrosine. In Hydra vulgaris (Hydra), this protein is Iodotyrosine deiodinase.